The sequence spans 656 residues: CoB--CoM heterodisulfide reductase iron-sulfur subunit A 2 (656 aa).

152–175 (GGGVSGIQAALDLADMGFEVILVE) serves as a coordination point for FAD. 4 4Fe-4S ferredoxin-type domains span residues 238–269 (KKPR…FDEG), 286–315 (SVFT…FDQE), 577–606 (IVSE…LVEK), and 610–639 (LVAE…QNHF). [4Fe-4S] cluster contacts are provided by Cys248, Cys251, Cys254, Cys258, Cys295, Cys298, Cys301, Cys305, Cys586, Cys589, Cys592, Cys596, Cys619, Cys622, Cys625, and Cys629.

The protein belongs to the HdrA family. As to quaternary structure, the ferredoxin:CoB-CoM heterodisulfide reductase is composed of three subunits; HdrA, HdrB and HdrC. It depends on [4Fe-4S] cluster as a cofactor. Requires FAD as cofactor.

The protein operates within cofactor metabolism; coenzyme M-coenzyme B heterodisulfide reduction; coenzyme B and coenzyme M from coenzyme M-coenzyme B heterodisulfide: step 1/1. Its function is as follows. Part of a complex that catalyzes the reversible reduction of CoM-S-S-CoB to the thiol-coenzymes H-S-CoM (coenzyme M) and H-S-CoB (coenzyme B). This Methanopyrus kandleri (strain AV19 / DSM 6324 / JCM 9639 / NBRC 100938) protein is CoB--CoM heterodisulfide reductase iron-sulfur subunit A 2 (hdrA2).